The following is a 1138-amino-acid chain: Myelin regulatory factor (1138 aa).

Over 1 to 768 (MEVVDETEAL…CISQRFLQGT (768 aa)) the chain is Cytoplasmic. Disordered regions lie at residues 56–150 (TASF…YSPQ), 171–200 (VSSR…HYPV), 246–267 (AELP…NTLN), and 279–339 (PGTV…SDSL). Over residues 67–88 (PGSSGLHHLSPPGSGPSPGRHG) the composition is skewed to low complexity. An N6-acetyllysine modification is found at K123. Residues 178–198 (PPPPPAHLPGPPPPPPPPPHY) show a composition bias toward pro residues. A DNA-binding region (NDT80) is located at residues 250–541 (PHPSKKRKHS…SNPGQFESDS (292 aa)). Residues 254–257 (KKRK) carry the Nuclear localization signal motif. The span at 286-302 (PPHPARAPSPPWPPQGP) shows a compositional bias: pro residues. Over residues 329-339 (SPGLLQDSDSL) the composition is skewed to low complexity. The Nuclear localization signal motif lies at 491 to 494 (KKGK). Positions 587-696 (SDLRAKEHVQ…KLTDNLETRI (110 aa)) constitute a Peptidase S74 domain. Residues 680–711 (GAVKELCKLTDNLETRIDELERWSHKLAKLRR) are a coiled coil. Residues 721-733 (SGAFSHAGSQFSR) are compositionally biased toward polar residues. Residues 721-753 (SGAFSHAGSQFSRAGSVPHKKRPPKLANKSSPA) form a disordered region. The tract at residues 765–1003 (LQGTIIALVV…QGQLDPAPSL (239 aa)) is required for interaction with TMEM98. The chain crosses the membrane as a helical span at residues 769–789 (IIALVVVMAFSVVSMSTLYVL). The Lumenal portion of the chain corresponds to 790–1138 (SLRSEEDLVD…YYFHFYRLCD (349 aa)). Over residues 891 to 900 (ATDPALGPTL) the composition is skewed to low complexity. Disordered stretches follow at residues 891–922 (ATDP…APLP) and 951–999 (ASPV…QLDP). Composition is skewed to polar residues over residues 961 to 974 (QSKT…NLQS) and 987 to 999 (PAQF…QLDP). N1030, N1052, and N1116 each carry an N-linked (GlcNAc...) asparagine glycan.

It belongs to the MRF family. Homotrimer. Interacts (via C-terminal region) with TMEM98; the interaction inhibits MYRF self-cleavage. In terms of processing, glycosylated. Follows autocatalytic cleavage via the peptidase S74 domain. Autoprocessing is apparently constitutive and is essential for transcriptional activity. Autocatalytic cleavage is inhibited by interaction with TMEM98. In terms of tissue distribution, specifically expressed by postmitotic oligodendrocytes in the CNS. Not detected in the peripheral nervous system (PNS).

It localises to the endoplasmic reticulum membrane. The protein localises to the nucleus. It is found in the cytoplasm. In terms of biological role, constitutes a precursor of the transcription factor. Mediates the autocatalytic cleavage that releases the Myelin regulatory factor, N-terminal component that specifically activates transcription of central nervous system (CNS) myelin genes. Membrane-bound part that has no transcription factor activity and remains attached to the endoplasmic reticulum membrane following cleavage. Functionally, transcription factor that specifically activates expression of myelin genes such as MBP, MOG, MAG, DUSP15 and PLP1 during oligodendrocyte (OL) maturation, thereby playing a central role in oligodendrocyte maturation and CNS myelination. Specifically recognizes and binds DNA sequence 5'-CTGGYAC-3' in the regulatory regions of myelin-specific genes and directly activates their expression. Not only required during oligodendrocyte differentiation but is also required on an ongoing basis for the maintenance of expression of myelin genes and for the maintenance of a mature, viable oligodendrocyte phenotype. This is Myelin regulatory factor (Myrf) from Mus musculus (Mouse).